We begin with the raw amino-acid sequence, 486 residues long: Chromosomal replication initiator protein DnaA (486 aa).

Residues 1–79 form a domain I, interacts with DnaA modulators region; it reads MEKSKNIWSL…GYNNIVIVFT (79 aa). The domain II stretch occupies residues 79–141; it reads TNQPPKTHSN…EEEPTNFKNP (63 aa). The segment at 142 to 358 is domain III, AAA+ region; it reads FLKKRYTFEN…AAVTKLKAYI (217 aa). Positions 186, 188, 189, and 190 each coordinate ATP. The domain IV, binds dsDNA stretch occupies residues 359-486; the sequence is DLDNIEIDIE…TELMNKIKKN (128 aa).

The protein belongs to the DnaA family. In terms of assembly, oligomerizes as a right-handed, spiral filament on DNA at oriC.

It is found in the cytoplasm. Plays an essential role in the initiation and regulation of chromosomal replication. ATP-DnaA binds to the origin of replication (oriC) to initiate formation of the DNA replication initiation complex once per cell cycle. Binds the DnaA box (a 9 base pair repeat at the origin) and separates the double-stranded (ds)DNA. Forms a right-handed helical filament on oriC DNA; dsDNA binds to the exterior of the filament while single-stranded (ss)DNA is stabiized in the filament's interior. The ATP-DnaA-oriC complex binds and stabilizes one strand of the AT-rich DNA unwinding element (DUE), permitting loading of DNA polymerase. After initiation quickly degrades to an ADP-DnaA complex that is not apt for DNA replication. Binds acidic phospholipids. Its function is as follows. Binds to the bpuR promoter, possibly at 5'-TTTTTAAA-3'. The chain is Chromosomal replication initiator protein DnaA from Borreliella burgdorferi (strain ATCC 35210 / DSM 4680 / CIP 102532 / B31) (Borrelia burgdorferi).